Consider the following 217-residue polypeptide: Adenylate kinase (217 aa).

11–16 (GAGKGT) is a binding site for ATP. The segment at 31 to 60 (STGDMFREAMANETPVGLEAKSYIDKGNLV) is NMP. AMP-binding positions include T32, R37, 58–60 (NLV), 86–89 (GFPR), and Q93. Residues 127-165 (ARYICKKCGATYNKISNPTKVEGTCDRCGGHEFFQREDD) form an LID region. R128 contributes to the ATP binding site. The Zn(2+) site is built by C131 and C134. 137–138 (TY) is a binding site for ATP. Positions 151 and 154 each coordinate Zn(2+). Residues R162 and R173 each contribute to the AMP site. Q201 is an ATP binding site.

It belongs to the adenylate kinase family. Monomer.

The protein localises to the cytoplasm. The enzyme catalyses AMP + ATP = 2 ADP. Its pathway is purine metabolism; AMP biosynthesis via salvage pathway; AMP from ADP: step 1/1. Catalyzes the reversible transfer of the terminal phosphate group between ATP and AMP. Plays an important role in cellular energy homeostasis and in adenine nucleotide metabolism. In Lactobacillus johnsonii (strain CNCM I-12250 / La1 / NCC 533), this protein is Adenylate kinase.